Consider the following 514-residue polypeptide: Maltose/maltodextrin transport system permease protein MalF (514 aa).

Over 1–16 the chain is Cytoplasmic; that stretch reads MDVIKKKHWWQSDALK. Residues 17-36 form a helical membrane-spanning segment; it reads WSVLGLLGLLVGYLVVLMYA. The Periplasmic segment spans residues 37-39; the sequence is QGE. Residues 40-58 traverse the membrane as a helical segment; the sequence is YLFAITTLILSSAGLYIFA. Over 59–66 the chain is Cytoplasmic; it reads NRKAYAWR. Residues 67–92 traverse the membrane as a helical segment; the sequence is YVYPGMAGMGLFVLFPLVCTIAIAFT. Topologically, residues 93-275 are periplasmic; that stretch reads NYSSTNQLTF…RVFTDEGIQK (183 aa). The chain crosses the membrane as a helical span at residues 276–306; it reads PFLAIFVWTVVFSLITVFLTVAVGMVLACLV. Residues 281-505 enclose the ABC transmembrane type-1 domain; the sequence is FVWTVVFSLI…LLVGALAIVN (225 aa). The Cytoplasmic portion of the chain corresponds to 307 to 318; the sequence is QWEALRGKAVYR. The helical transmembrane segment at 319–336 threads the bilayer; sequence VLLILPYAVPSFISILIF. At 337–369 the chain is on the periplasmic side; that stretch reads KGLFNQSFGEINMMLSALFGVKPAWFSDPTTAR. The helical transmembrane segment at 370-392 threads the bilayer; it reads TMLIIVNTWLGYPYMMILCMGLL. At 393–425 the chain is on the cytoplasmic side; that stretch reads KAIPDDLYEASAMDGAGPFQNFFKITLPLLIKP. The helical transmembrane segment at 426-452 threads the bilayer; sequence LTPLMIASFAFNFNNFVLIQLLTNGGP. Over 453–483 the chain is Periplasmic; that stretch reads DRLGTTTPAGYTDLLVNYTYRIAFEGGGGQD. Residues 484-505 form a helical membrane-spanning segment; that stretch reads FGLAAAIATLIFLLVGALAIVN. Over 506–514 the chain is Cytoplasmic; that stretch reads LKATRMKFD.

The protein belongs to the binding-protein-dependent transport system permease family. MalFG subfamily. In terms of assembly, the complex is composed of two ATP-binding proteins (MalK), two transmembrane proteins (MalG and MalF) and a solute-binding protein (MalE). Protein stability and stable complex formation require YidC.

The protein localises to the cell inner membrane. In terms of biological role, part of the ABC transporter complex MalEFGK involved in maltose/maltodextrin import. Probably responsible for the translocation of the substrate across the membrane. This is Maltose/maltodextrin transport system permease protein MalF from Escherichia coli (strain K12).